The chain runs to 23 residues: uncharacterized protein (23 aa).

The helical transmembrane segment at 3–23 (YFFMGISFMVIVWAGTFALMI) threads the bilayer.

It localises to the cell inner membrane. This is an uncharacterized protein from Escherichia coli (strain K12).